The primary structure comprises 88 residues: Small ribosomal subunit protein bS20 (88 aa).

The protein belongs to the bacterial ribosomal protein bS20 family.

Its function is as follows. Binds directly to 16S ribosomal RNA. The sequence is that of Small ribosomal subunit protein bS20 from Bartonella quintana (strain Toulouse) (Rochalimaea quintana).